A 101-amino-acid polypeptide reads, in one-letter code: MMSPPMTTTLMFILNYAIISFHGQPSGISWGNHIETAEAAAILAMANRELRSRELLLWTSGSTHLLLQPILPLPLCLPFPLVPASIFKKMMLPLSAFSFWM.

The signal sequence occupies residues 1-23; the sequence is MMSPPMTTTLMFILNYAIISFHG. Positions 48-51 match the RxLR motif; the sequence is RELR. Residues 67-87 traverse the membrane as a helical segment; sequence LQPILPLPLCLPFPLVPASIF.

The protein belongs to the RxLR effector family.

Its subcellular location is the secreted. The protein resides in the host cytoplasm. The protein localises to the host nucleus. It is found in the membrane. Its function is as follows. Effector that acts as a broad suppressor of cell death to interrupt plant immunity. Inhibits cell death induced by cell death-inducing proteins, including the PAMP elicitor INF1 from P.infestans. This Plasmopara viticola (Downy mildew of grapevine) protein is Secreted RxLR effector protein 64.